Consider the following 232-residue polypeptide: Large ribosomal subunit protein uL1 (232 aa).

Belongs to the universal ribosomal protein uL1 family. In terms of assembly, part of the 50S ribosomal subunit.

Binds directly to 23S rRNA. The L1 stalk is quite mobile in the ribosome, and is involved in E site tRNA release. Functionally, protein L1 is also a translational repressor protein, it controls the translation of the L11 operon by binding to its mRNA. This is Large ribosomal subunit protein uL1 from Burkholderia lata (strain ATCC 17760 / DSM 23089 / LMG 22485 / NCIMB 9086 / R18194 / 383).